We begin with the raw amino-acid sequence, 277 residues long: MGIRKYKPTSPGRRGGSVSTFAEITRSKPEKSLVRPLHSKGGRNGHGRITARHQGGGHKRAYRLIDFRRHDKDGIPAKVAHIEYDPNRTARIALLHYVDGEKRYILAPVGLKQGDRVENGPAADIKPGNCLPLRNIPTGTFVHAVELKPGGGAKLGRAAGAAIQLLAKEGAYATLRMPSGEMRQVEVACRATVGQVGNVEHANISWGKAGRMRWKGKRPSVRGVAMNPIDHPHGGGEGRTSGGRHPVSPWGKAEGRTRKKGKPSDRLIVRRRSKKKR.

2 disordered regions span residues 1–55 (MGIR…RHQG) and 217–277 (KRPS…KKKR). The segment covering 37 to 55 (LHSKGGRNGHGRITARHQG) has biased composition (basic residues).

This sequence belongs to the universal ribosomal protein uL2 family. In terms of assembly, part of the 50S ribosomal subunit. Forms a bridge to the 30S subunit in the 70S ribosome.

In terms of biological role, one of the primary rRNA binding proteins. Required for association of the 30S and 50S subunits to form the 70S ribosome, for tRNA binding and peptide bond formation. It has been suggested to have peptidyltransferase activity; this is somewhat controversial. Makes several contacts with the 16S rRNA in the 70S ribosome. This is Large ribosomal subunit protein uL2 from Thermobifida fusca (strain YX).